The following is a 280-amino-acid chain: 4-diphosphocytidyl-2-C-methyl-D-erythritol kinase (280 aa).

The active site involves lysine 9. 92-102 (PMGGGLGGGSS) is an ATP binding site. Aspartate 134 is a catalytic residue.

Belongs to the GHMP kinase family. IspE subfamily.

The catalysed reaction is 4-CDP-2-C-methyl-D-erythritol + ATP = 4-CDP-2-C-methyl-D-erythritol 2-phosphate + ADP + H(+). The protein operates within isoprenoid biosynthesis; isopentenyl diphosphate biosynthesis via DXP pathway; isopentenyl diphosphate from 1-deoxy-D-xylulose 5-phosphate: step 3/6. Catalyzes the phosphorylation of the position 2 hydroxy group of 4-diphosphocytidyl-2C-methyl-D-erythritol. In Nitrosococcus oceani (strain ATCC 19707 / BCRC 17464 / JCM 30415 / NCIMB 11848 / C-107), this protein is 4-diphosphocytidyl-2-C-methyl-D-erythritol kinase.